The following is a 102-amino-acid chain: Head completion protein gp15 (102 aa).

Belongs to the Caudoviricetes gp6/gp15 head completion protein family. Homododecamer. Interacts with the stopper protein gp16. Interacts with the portal protein; this interaction occurs at the end of the packaging when the terminase complex is replaced by the connector.

It is found in the virion. Its function is as follows. Head completion protein that exhibits an open central channel for viral DNA ejection. Part of the head-tail connector by binding to the portal protein and to the head completion protein 16. The chain is Head completion protein gp15 from Bacillus phage SPP1 (Bacteriophage SPP1).